Reading from the N-terminus, the 452-residue chain is Pup--protein ligase (452 aa).

Position 9 (Glu-9) interacts with Mg(2+). An ATP-binding site is contributed by Arg-53. Position 55 (Tyr-55) interacts with Mg(2+). Asp-57 acts as the Proton acceptor in catalysis. Glu-63 provides a ligand contact to Mg(2+). ATP is bound by residues Thr-66 and Trp-419.

Belongs to the Pup ligase/Pup deamidase family. Pup-conjugating enzyme subfamily.

The catalysed reaction is ATP + [prokaryotic ubiquitin-like protein]-L-glutamate + [protein]-L-lysine = ADP + phosphate + N(6)-([prokaryotic ubiquitin-like protein]-gamma-L-glutamyl)-[protein]-L-lysine.. The protein operates within protein degradation; proteasomal Pup-dependent pathway. Its pathway is protein modification; protein pupylation. Its function is as follows. Catalyzes the covalent attachment of the prokaryotic ubiquitin-like protein modifier Pup to the proteasomal substrate proteins, thereby targeting them for proteasomal degradation. This tagging system is termed pupylation. The ligation reaction involves the side-chain carboxylate of the C-terminal glutamate of Pup and the side-chain amino group of a substrate lysine. This is Pup--protein ligase from Salinispora arenicola (strain CNS-205).